We begin with the raw amino-acid sequence, 87 residues long: U3-theraphotoxin-Hhn1a 17 (87 aa).

Positions 1 to 24 (MVNVKASMFLTFAGLVLLFVVCYA) are cleaved as a signal peptide. A propeptide spanning residues 25–52 (SESEEKEFPKEMLSSIFAVDNDFKQEER) is cleaved from the precursor. 3 cysteine pairs are disulfide-bonded: Cys54-Cys67, Cys61-Cys72, and Cys66-Cys79.

This sequence belongs to the neurotoxin 10 (Hwtx-1) family. 51 (Hntx-8) subfamily. Hntx-8 sub-subfamily. In terms of tissue distribution, expressed by the venom gland.

The protein localises to the secreted. Its function is as follows. Ion channel inhibitor. The polypeptide is U3-theraphotoxin-Hhn1a 17 (Cyriopagopus hainanus (Chinese bird spider)).